Reading from the N-terminus, the 83-residue chain is UPF0457 protein YnzG (83 aa).

This sequence belongs to the UPF0457 family.

The sequence is that of UPF0457 protein YnzG (ynzG) from Bacillus subtilis (strain 168).